The sequence spans 1326 residues: F-box/WD repeat-containing protein 7 (1326 aa).

Disordered stretches follow at residues 1–58, 123–187, 318–351, 399–549, 615–642, and 797–843; these read MERG…AEVG, DSSS…IEDE, TVSN…ALSR, GSKA…SGCS, RSNP…RNGS, and TPRS…NPPP. Residues 9-39 are compositionally biased toward polar residues; sequence SSESVTSAGERTQSAVTSSTSTWVKSQASTS. The segment covering 165–187 has biased composition (acidic residues); sequence NDDDDDEEPEPEEDDEEELIEDE. The segment covering 320–348 has biased composition (low complexity); the sequence is SNPSPAASANAAAPEEASTSNSSSTSSSA. Polar residues predominate over residues 403-464; it reads ANGSGTANSD…KLNLGSSLGA (62 aa). Low complexity predominate over residues 465–486; it reads SSCSQHRSGSSSTSKSMESSTS. Residues 495–504 show a composition bias toward polar residues; that stretch reads VYTNTNSNDY. Low complexity-rich tracts occupy residues 510 to 520, 528 to 546, and 616 to 631; these read TTSGSSTSGGS, NVSA…SQES, and SNPP…GANP. 2 stretches are compositionally biased toward polar residues: residues 632 to 642 and 797 to 824; these read TASVRQRRNGS and TPRS…STPG. Threonine 813 is modified (phosphothreonine). The residue at position 825 (serine 825) is a Phosphoserine. The F-box domain maps to 889–935; that stretch reads RDFISLLPRELALFVLSYLEPKDLLRAAQTCRSWRFLCDDNLLWKEK. WD repeat units lie at residues 992-1030, 1033-1070, 1073-1110, 1113-1150, 1153-1190, 1193-1232, and 1236-1273; these read GHDD…CLRT, GHTG…CVHT, GHTS…CLHV, GHLA…CLHT, GHTN…CKHT, GHQS…QTLS, and KHHS…FIRN.

In terms of assembly, part of a SCF E3 ubiquitin-protein ligase complex. Interacts with Myc and puf. Interacts with CycE. Expressed in follicle cell epithelium and imaginal disks, particularly in the morphogenetic furrow.

The protein localises to the nucleus. The protein operates within protein modification; protein ubiquitination. Substrate recognition component of a SCF (SKP1-CUL1-F-box protein) E3 ubiquitin-protein ligase complex which mediates the ubiquitination and subsequent proteasomal degradation of target proteins. Probably recognizes and binds to phosphorylated target proteins. In the wing and eye, negatively regulates cell growth and proliferation by mediating the degradation of Myc and cyclin E, respectively. Required for endocycles, but not mitosis in follicle cell epithelium. This Drosophila melanogaster (Fruit fly) protein is F-box/WD repeat-containing protein 7.